The chain runs to 72 residues: Large ribosomal subunit protein bL32 (72 aa).

The protein belongs to the bacterial ribosomal protein bL32 family.

The protein is Large ribosomal subunit protein bL32 of Dehalococcoides mccartyi (strain ATCC BAA-2100 / JCM 16839 / KCTC 5957 / BAV1).